The primary structure comprises 271 residues: Pyridoxine kinase (271 aa).

ATP is bound at residue Asn141. Residue Glu144 coordinates Mg(2+). ATP is bound by residues 178 to 182 (TGGGK), Asp190, Ile206, Gly215, and Lys240.

Belongs to the ThiD family. As to quaternary structure, homodimer.

The enzyme catalyses pyridoxal + ATP = pyridoxal 5'-phosphate + ADP + H(+). Functionally, phosphorylates B6 vitamers; functions in a salvage pathway. Uses pyridoxal, pyridoxine, and pyridoxamine as substrates. Can also use hydroxymethylpyrimidine (HMP) as substrate. This chain is Pyridoxine kinase (pdxK), found in Bacillus subtilis (strain 168).